A 429-amino-acid chain; its full sequence is Histidinol dehydrogenase (429 aa).

Positions 130, 191, and 214 each coordinate NAD(+). 3 residues coordinate substrate: S237, Q259, and H262. Positions 259 and 262 each coordinate Zn(2+). Residues E327 and H328 each act as proton acceptor in the active site. Substrate-binding residues include H328, D361, E415, and H420. Zn(2+) is bound at residue D361. Residue H420 participates in Zn(2+) binding.

The protein belongs to the histidinol dehydrogenase family. Zn(2+) is required as a cofactor.

The catalysed reaction is L-histidinol + 2 NAD(+) + H2O = L-histidine + 2 NADH + 3 H(+). It functions in the pathway amino-acid biosynthesis; L-histidine biosynthesis; L-histidine from 5-phospho-alpha-D-ribose 1-diphosphate: step 9/9. Functionally, catalyzes the sequential NAD-dependent oxidations of L-histidinol to L-histidinaldehyde and then to L-histidine. The protein is Histidinol dehydrogenase of Neisseria gonorrhoeae (strain ATCC 700825 / FA 1090).